Here is a 271-residue protein sequence, read N- to C-terminus: Phosphoribosylformylglycinamidine synthase subunit PurQ (271 aa).

Residues 7–253 (KVAVLRMEGT…FGYQVGRREG (247 aa)) enclose the Glutamine amidotransferase type-1 domain. The Nucleophile role is filled by cysteine 104. Catalysis depends on residues histidine 238 and glutamate 240.

As to quaternary structure, part of the FGAM synthase complex composed of 1 PurL, 1 PurQ and 2 PurS subunits.

The protein resides in the cytoplasm. It catalyses the reaction N(2)-formyl-N(1)-(5-phospho-beta-D-ribosyl)glycinamide + L-glutamine + ATP + H2O = 2-formamido-N(1)-(5-O-phospho-beta-D-ribosyl)acetamidine + L-glutamate + ADP + phosphate + H(+). The catalysed reaction is L-glutamine + H2O = L-glutamate + NH4(+). It functions in the pathway purine metabolism; IMP biosynthesis via de novo pathway; 5-amino-1-(5-phospho-D-ribosyl)imidazole from N(2)-formyl-N(1)-(5-phospho-D-ribosyl)glycinamide: step 1/2. Functionally, part of the phosphoribosylformylglycinamidine synthase complex involved in the purines biosynthetic pathway. Catalyzes the ATP-dependent conversion of formylglycinamide ribonucleotide (FGAR) and glutamine to yield formylglycinamidine ribonucleotide (FGAM) and glutamate. The FGAM synthase complex is composed of three subunits. PurQ produces an ammonia molecule by converting glutamine to glutamate. PurL transfers the ammonia molecule to FGAR to form FGAM in an ATP-dependent manner. PurS interacts with PurQ and PurL and is thought to assist in the transfer of the ammonia molecule from PurQ to PurL. This Archaeoglobus fulgidus (strain ATCC 49558 / DSM 4304 / JCM 9628 / NBRC 100126 / VC-16) protein is Phosphoribosylformylglycinamidine synthase subunit PurQ.